The following is a 174-amino-acid chain: Urease accessory protein UreE (174 aa).

Belongs to the UreE family.

It is found in the cytoplasm. In terms of biological role, involved in urease metallocenter assembly. Binds nickel. Probably functions as a nickel donor during metallocenter assembly. In Helicobacter hepaticus (strain ATCC 51449 / 3B1), this protein is Urease accessory protein UreE.